Here is a 263-residue protein sequence, read N- to C-terminus: Lens fiber major intrinsic protein (263 aa).

Residues 1–12 (MWELRSASFWRA) are Cytoplasmic-facing. Residues 13 to 30 (IFAEFFATLFYVFFGLGA) form a helical membrane-spanning segment. Topologically, residues 31 to 40 (SLRWAPGPLH) are extracellular. Residues 41–59 (VLQVALAFGLALATLVQAV) form a helical membrane-spanning segment. The Cytoplasmic portion of the chain corresponds to 60-63 (GHIS). Residues 64–76 (GAHVNPAVTFAFL) constitute an intramembrane region (discontinuously helical). The short motif at 68–70 (NPA) is the NPA 1 element. The Cytoplasmic portion of the chain corresponds to 77 to 85 (VGSQMSLLR). The helical transmembrane segment at 86 to 106 (AICYVVAQLLGAVAGAAVLYS) threads the bilayer. The Extracellular segment spans residues 107–126 (VTPPAVRGNLALNTLHPGVS). Residues 127–147 (VGQATIVEIFLTLQFVLCIFA) form a helical membrane-spanning segment. At 148–157 (TYDERRNGRL) the chain is on the cytoplasmic side. The helical transmembrane segment at 158-175 (GSVALAVGFSLTLGHLFG) threads the bilayer. The Extracellular segment spans residues 176–177 (MY). The discontinuously helical intramembrane region spans 178 to 193 (YTGAGMNPARSFAPAI). The NPA 2 signature appears at 184 to 186 (NPA). The Extracellular portion of the chain corresponds to 194–200 (LTRNFTN). A helical membrane pass occupies residues 201–218 (HWVYWVGPVIGAGLGSLL). The Cytoplasmic segment spans residues 219–263 (YDFLLFPRLKSVSERLSILKGTRPSESNGQPEVTGEPVELKTQAL). The interval 227-237 (LKSVSERLSIL) is interaction with CALM. S235, S243, and S245 each carry phosphoserine. A disordered region spans residues 240–263 (TRPSESNGQPEVTGEPVELKTQAL).

This sequence belongs to the MIP/aquaporin (TC 1.A.8) family. Homotetramer; each monomer provides an independent water pore. Two homotetramers on opposing membranes can dimerize, forming a cell-cell junction. Interacts with CALM; the calcium-calmodulin/CALM complex interacts with the cytoplasmic domains of two aquaporins, leading to channel closure. Interacts with BFSP1 (via C-terminus); prevents calcium-dependent inhibition of the water channel activity. In terms of processing, subject to partial proteolytic cleavage in the eye lens core. Partial proteolysis promotes interactions between tetramers from adjoining membranes. Post-translationally, fatty acylated at Met-1 and Lys-238. The acyl modifications, in decreasing order of ion abundance, are: oleoyl (C18:1) &gt; palmitoyl (C16:0) &gt; stearoyl (C18:0) &gt; eicosenoyl (C20:1) &gt; dihomo-gamma-linolenoyl (C20:3) &gt; palmitoleoyl (C16:1) &gt; eicosadienoyl (C20:2). In terms of tissue distribution, detected in eye lens (at protein level).

It localises to the cell membrane. Its subcellular location is the cell junction. The catalysed reaction is H2O(in) = H2O(out). The water channel activity is inhibited by calcium through calmodulin/CALM. In terms of biological role, aquaporins form homotetrameric transmembrane channels, with each monomer independently mediating water transport across the plasma membrane along its osmotic gradient. Specifically expressed in lens fiber cells, this aquaporin is crucial for maintaining lens water homeostasis and transparency. Beyond water permeability, it also acts as a cell-to-cell adhesion molecule, forming thin junctions between lens fiber cells that are essential for maintaining the ordered structure and transparency of the lens. This chain is Lens fiber major intrinsic protein, found in Ovis aries (Sheep).